A 167-amino-acid polypeptide reads, in one-letter code: Translation initiation factor IF-3 (167 aa).

Belongs to the IF-3 family. In terms of assembly, monomer.

It is found in the cytoplasm. In terms of biological role, IF-3 binds to the 30S ribosomal subunit and shifts the equilibrium between 70S ribosomes and their 50S and 30S subunits in favor of the free subunits, thus enhancing the availability of 30S subunits on which protein synthesis initiation begins. The protein is Translation initiation factor IF-3 of Shouchella clausii (strain KSM-K16) (Alkalihalobacillus clausii).